The chain runs to 304 residues: DCN1-like protein 3 (304 aa).

2 disordered regions span residues 1–86 (MGQC…AEES) and 284–304 (EGEG…EEQT). A lipid anchor (N-myristoyl glycine) is attached at Gly-2. Residues 86–278 (SSLQRLEELF…LFDTFVEWEM (193 aa)) enclose the DCUN1 domain.

As to quaternary structure, part of a complex containing DCUN1D3, CUL3 and RBX1. Interacts (via the DCUN1 domain) with the unneddylated cullins: interacts with CUL1, CUL2, CUL3, CUL4A, CUL4B and CUL5; these interactions promote the cullin neddylation and the identity of the cullin dictates the affinity of the interaction. Interacts preferentially with CUL3; this interaction triggers the relocalization of CUL3 to the cell membrane where CUL3 is neddylated. Interacts (via DCUN1 domain) with RBX1. May also interact with regulators or subunits of cullin-RING ligases such as RNF7, ELOB and DDB1; these interactions are bridged by cullins. Interacts (via DCUN1 domain) with CAND1; this interaction is bridged by cullins and strongly inhibits cullin neddylation. These CAND-cullin-DCNL complexes can only be neddylated in the presence of a substrate adapter. Interacts (via DCUN1 domain) with the N-terminally acetylated form of UBE2M and UBE2F. In terms of tissue distribution, tends to be down-regulated in different type of cancers, including lung neuroendocrine carcinoma, thyroid Huerthle cell carcinoma and lung squamous cell carcinoma. Mostly expressed in testis and brain. Highly expressed in liver, bladder and renal normal tissue than their tumor tissue counterparts. Palmitoylation stabilizes DCUN1D3 at the cell membrane.

The protein resides in the cell membrane. The protein localises to the cytoplasm. It is found in the nucleus. Its subcellular location is the perinuclear region. Contributes to the neddylation of all cullins by transferring NEDD8 from N-terminally acetylated NEDD8-conjugating E2s enzyme to different cullin C-terminal domain-RBX complexes and may play a role in the cell cycle progression by regulating the SCF ubiquitin E3 ligase complex, after UV damage. At the cell membrane, can promote and as well inhibit cullins neddylation. The polypeptide is DCN1-like protein 3 (Homo sapiens (Human)).